A 289-amino-acid chain; its full sequence is Fumagillin beta-trans-bergamotene synthase af520 (289 aa).

Transmembrane regions (helical) follow at residues 35 to 55, 95 to 115, 142 to 162, 165 to 185, 222 to 242, and 262 to 282; these read AVAL…GFLW, TLLY…TNTI, LIGA…FDGG, LHGL…TTGH, AWTI…LAYV, and YVSY…PIFP.

The protein belongs to the paxB family.

Its subcellular location is the membrane. It catalyses the reaction (2E,6E)-farnesyl diphosphate = (+)-exo-beta-bergamotene + diphosphate. It participates in secondary metabolite biosynthesis; terpenoid biosynthesis. Functionally, beta-trans-bergamotene synthase; part of the gene cluster that mediates the biosynthesis of fumagillin, a meroterpenoid that has numerous biological activities including irreversible inhibition of human type 2 methionine aminopeptidase (METAP2). Within the pathway, the membrane-bound fumagillin beta-trans-bergamotene synthase af520 converts farnesyl pyrophosphate (FPP) to beta-trans-bergamotene. The pathway begins with the conversion of FPP to beta-trans-bergamotene by af520. The multifunctional cytochrome P450 monooxygenase af510 then converts beta-trans-bergamotene into 5-keto-demethoxyfumagillol via several oxydation steps. 5-keto-demethoxyfumagillol is then subjected to successive C-6 hydroxylation and O-methylation by the dioxygenase af480 and O-methyltransferase af390-400, respectively, to yield 5-keto-fumagillol, which is then stereoselectively reduced by the keto-reductase af490 to 5R-hydroxy-seco-sesquiterpene. The next step is the polyketide transferase af380-catalyzed transfer of a dodecapentaenoyl group synthesized by the polyketide synthase af370 onto 5R-hydroxy-seco-sesquiterpene which leads to the production of prefumagillin. Finally, oxidative cleavage by the monooxygenase af470 converts prefumagillin to fumagillin. This Aspergillus fumigatus (strain ATCC MYA-4609 / CBS 101355 / FGSC A1100 / Af293) (Neosartorya fumigata) protein is Fumagillin beta-trans-bergamotene synthase af520.